Consider the following 324-residue polypeptide: Elongation factor P--(R)-beta-lysine ligase (324 aa).

75–77 serves as a coordination point for substrate; it reads SPE. ATP is bound by residues 99–101 and N108; that span reads RNK. Y117 contacts substrate. 243-244 contributes to the ATP binding site; sequence EL. E250 contacts substrate. Residue G299 participates in ATP binding.

It belongs to the class-II aminoacyl-tRNA synthetase family. EpmA subfamily. In terms of assembly, homodimer.

It catalyses the reaction D-beta-lysine + L-lysyl-[protein] + ATP = N(6)-((3R)-3,6-diaminohexanoyl)-L-lysyl-[protein] + AMP + diphosphate + H(+). In terms of biological role, with EpmB is involved in the beta-lysylation step of the post-translational modification of translation elongation factor P (EF-P). Catalyzes the ATP-dependent activation of (R)-beta-lysine produced by EpmB, forming a lysyl-adenylate, from which the beta-lysyl moiety is then transferred to the epsilon-amino group of a conserved specific lysine residue in EF-P. The protein is Elongation factor P--(R)-beta-lysine ligase of Buchnera aphidicola subsp. Acyrthosiphon pisum (strain APS) (Acyrthosiphon pisum symbiotic bacterium).